The sequence spans 102 residues: Protamine-2 (102 aa).

Residues serine 8, serine 10, and serine 37 each carry the phosphoserine modification. Disordered stretches follow at residues 15-41 (EVYG…PEQV) and 66-102 (IHRQ…CRRH).

Belongs to the protamine P2 family. As to quaternary structure, interacts with TDRP. In terms of processing, proteolytic processing into mature chains is required for histone eviction during spermatogenesis. Transition proteins (TNP1 and TNP2) are required for processing. In terms of tissue distribution, testis.

It localises to the nucleus. The protein resides in the chromosome. In terms of biological role, protamines substitute for histones in the chromatin of sperm during the haploid phase of spermatogenesis. They compact sperm DNA into a highly condensed, stable and inactive complex. The sequence is that of Protamine-2 (PRM2) from Pongo pygmaeus (Bornean orangutan).